Consider the following 306-residue polypeptide: Ribosomal RNA small subunit methyltransferase H (306 aa).

S-adenosyl-L-methionine contacts are provided by residues G33–Y35, D51, F82, D96, and Q103.

This sequence belongs to the methyltransferase superfamily. RsmH family.

The protein localises to the cytoplasm. It catalyses the reaction cytidine(1402) in 16S rRNA + S-adenosyl-L-methionine = N(4)-methylcytidine(1402) in 16S rRNA + S-adenosyl-L-homocysteine + H(+). Functionally, specifically methylates the N4 position of cytidine in position 1402 (C1402) of 16S rRNA. The protein is Ribosomal RNA small subunit methyltransferase H of Rickettsia akari (strain Hartford).